The chain runs to 182 residues: tRNA-splicing endonuclease (182 aa).

Residues Tyr119, His127, and Lys158 contribute to the active site.

This sequence belongs to the tRNA-intron endonuclease family. Archaeal short subfamily. Homotetramer; although the tetramer contains four active sites, only two participate in the cleavage. Therefore, it should be considered as a dimer of dimers.

It carries out the reaction pretRNA = a 3'-half-tRNA molecule with a 5'-OH end + a 5'-half-tRNA molecule with a 2',3'-cyclic phosphate end + an intron with a 2',3'-cyclic phosphate and a 5'-hydroxyl terminus.. Endonuclease that removes tRNA introns. Cleaves pre-tRNA at the 5'- and 3'-splice sites to release the intron. The products are an intron and two tRNA half-molecules bearing 2',3' cyclic phosphate and 5'-OH termini. Recognizes a pseudosymmetric substrate in which 2 bulged loops of 3 bases are separated by a stem of 4 bp. This is tRNA-splicing endonuclease from Saccharolobus solfataricus (strain ATCC 35092 / DSM 1617 / JCM 11322 / P2) (Sulfolobus solfataricus).